A 122-amino-acid chain; its full sequence is Large ribosomal subunit protein uL14 (122 aa).

This sequence belongs to the universal ribosomal protein uL14 family. As to quaternary structure, part of the 50S ribosomal subunit. Forms a cluster with proteins L3 and L19. In the 70S ribosome, L14 and L19 interact and together make contacts with the 16S rRNA in bridges B5 and B8.

Binds to 23S rRNA. Forms part of two intersubunit bridges in the 70S ribosome. The protein is Large ribosomal subunit protein uL14 of Shewanella baltica (strain OS223).